The following is a 276-amino-acid chain: Diaminopimelate epimerase (276 aa).

3 residues coordinate substrate: asparagine 13, glutamine 46, and asparagine 66. Cysteine 75 functions as the Proton donor in the catalytic mechanism. Substrate is bound by residues 76–77, asparagine 159, asparagine 192, and 210–211; these read GN and ER. The Proton acceptor role is filled by cysteine 219. 220 to 221 lines the substrate pocket; the sequence is GT.

It belongs to the diaminopimelate epimerase family. As to quaternary structure, homodimer.

It is found in the cytoplasm. The catalysed reaction is (2S,6S)-2,6-diaminopimelate = meso-2,6-diaminopimelate. It functions in the pathway amino-acid biosynthesis; L-lysine biosynthesis via DAP pathway; DL-2,6-diaminopimelate from LL-2,6-diaminopimelate: step 1/1. Its function is as follows. Catalyzes the stereoinversion of LL-2,6-diaminopimelate (L,L-DAP) to meso-diaminopimelate (meso-DAP), a precursor of L-lysine and an essential component of the bacterial peptidoglycan. This chain is Diaminopimelate epimerase, found in Pseudomonas syringae pv. syringae (strain B728a).